The following is a 538-amino-acid chain: Lipid scramblase CLPTM1L (538 aa).

Residues 1–9 are Cytoplasmic-facing; it reads MFPKTSFTS. A helical membrane pass occupies residues 10-30; it reads LIVGVFLLYVLHTCWVMYGIV. The Extracellular segment spans residues 31-284; it reads YTKPCEKRRA…IKGIFVDTNL (254 aa). N-linked (GlcNAc...) asparagine glycans are attached at residues asparagine 90 and asparagine 100. Positions 140-166 are disordered; that stretch reads ISLITGQDEPEKPDQQKQSSDSELDRP. N-linked (GlcNAc...) asparagine glycosylation occurs at asparagine 229. A helical membrane pass occupies residues 285–305; that stretch reads YFLALTFFVAAFHLLFDFLAF. The Cytoplasmic portion of the chain corresponds to 306 to 324; that stretch reads KNDISFWKHKKSMVGMSSK. Residues 325–341 form a helical membrane-spanning segment; that stretch reads AVLWRCFSTIVIFLYLL. The Extracellular portion of the chain corresponds to 342–402; sequence DEQTSLLVLV…TEEYDTLAMK (61 aa). A helical membrane pass occupies residues 403-423; it reads YLSYLLYPLCVGGAVYALVFV. The Cytoplasmic segment spans residues 424-428; sequence KYKSW. Residues 429 to 449 form a helical membrane-spanning segment; the sequence is YSWIINSLVNGVYAFGFLFML. At 450–538 the chain is on the extracellular side; it reads PQLFVNYKLK…EKPKGKSHED (89 aa).

The protein belongs to the CLPTM1 family.

Its subcellular location is the endoplasmic reticulum membrane. It carries out the reaction a 6-(alpha-D-glucosaminyl)-1-(1,2-diacyl-sn-glycero-3-phospho)-1D-myo-inositol(in) = a 6-(alpha-D-glucosaminyl)-1-(1,2-diacyl-sn-glycero-3-phospho)-1D-myo-inositol(out). The enzyme catalyses 6-(alpha-D-glucosaminyl)-(1-octadecanoyl,2-(9Z)-octadecenoyl-sn-glycero-3-phospho)-1D-myo-inositol(in) = 6-(alpha-D-glucosaminyl)-(1-octadecanoyl,2-(9Z)-octadecenoyl-sn-glycero-3-phospho)-1D-myo-inositol(out). The catalysed reaction is a 1,2-diacyl-sn-glycero-3-phospho-(1D-myo-inositol)(in) = a 1,2-diacyl-sn-glycero-3-phospho-(1D-myo-inositol)(out). It catalyses the reaction a 1,2-diacyl-sn-glycero-3-phosphocholine(in) = a 1,2-diacyl-sn-glycero-3-phosphocholine(out). It carries out the reaction a 1,2-diacyl-sn-glycero-3-phosphoethanolamine(in) = a 1,2-diacyl-sn-glycero-3-phosphoethanolamine(out). Functionally, scramblase that mediates the translocation of glucosaminylphosphatidylinositol (alpha-D-GlcN-(1-6)-(1,2-diacyl-sn-glycero-3-phospho)-1D-myo-inositol, GlcN-PI) across the endoplasmic reticulum (ER) membrane, from the cytosolic leaflet to the luminal leaflet of the ER membrane, where it participates in the biosynthesis of glycosylphosphatidylinositol (GPI). GPI is a lipid glycoconjugate involved in post-translational modification of proteins. Can also translocate 1,2-diacyl-sn-glycero-3-phospho-(1D-myo-inositol) (phosphatidylinositol or PI), as well as several other phospholipids (1,2-diacyl-sn-glycero-3-phosphocholine, 1,2-diacyl-sn-glycero-3-phosphoethanolamine), and N-acetylglucosaminylphosphatidylinositol (GlcNAc-PI) in vitro. The chain is Lipid scramblase CLPTM1L (clptm1l) from Danio rerio (Zebrafish).